The chain runs to 542 residues: Chaperonin GroEL (542 aa).

Residues 29–32, 86–90, Gly413, and Asp493 each bind ATP; these read TLGP and DGTTT.

It belongs to the chaperonin (HSP60) family. Forms a cylinder of 14 subunits composed of two heptameric rings stacked back-to-back. Interacts with the co-chaperonin GroES.

The protein localises to the cytoplasm. The catalysed reaction is ATP + H2O + a folded polypeptide = ADP + phosphate + an unfolded polypeptide.. In terms of biological role, together with its co-chaperonin GroES, plays an essential role in assisting protein folding. The GroEL-GroES system forms a nano-cage that allows encapsulation of the non-native substrate proteins and provides a physical environment optimized to promote and accelerate protein folding. This chain is Chaperonin GroEL, found in Elusimicrobium minutum (strain Pei191).